A 1031-amino-acid chain; its full sequence is Pre-mRNA-splicing factor SYF1 (1031 aa).

HAT repeat units lie at residues 28 to 60 (HLIP…NVKE), 90 to 122 (DGLQ…TRQS), 214 to 248 (KNGS…WAEI), and 250 to 269 (GGDA…PSLT). Residues 346–368 (VEEKVDGEQPQVEGQEQQPQEEP) are disordered. Low complexity predominate over residues 353-368 (EQPQVEGQEQQPQEEP). HAT repeat units follow at residues 452–487 (GEFE…FSET), 610–646 (PDLE…MELR), 664–698 (PKNT…LEES), 700–732 (GTVE…FLEE), 734–768 (KYFE…KFVK), 773–807 (KKLE…LEEE), 845–879 (FGLP…MERK), and 881–915 (GEID…FEIE). 2 disordered regions span residues 948-969 (AAAS…QDAA) and 1003-1031 (TNAN…EDEF).

This sequence belongs to the crooked-neck family. In terms of assembly, associated with the spliceosome.

It is found in the nucleus. In terms of biological role, involved in pre-mRNA splicing and cell cycle progression. This Cryptococcus neoformans var. neoformans serotype D (strain B-3501A) (Filobasidiella neoformans) protein is Pre-mRNA-splicing factor SYF1 (SYF1).